The primary structure comprises 211 residues: MAETCKMKYSVLDSPLGKMELSGCERGLHGIRLLSGKTPNTDPTEAPATPEVLGGPEGVPEPLVQCTAWLEAYFREPAATEGLPLPALHHPVFQQDSFTRQVLWKLLKVVKFGETVSYQQLAALAGNPKAARAVGGAMRSNPVPILIPCHRVVRSDGAIGHYSGGGQAVKEWLLAHEGIPTGQPASKGLGLTGTWLKSSFESTSSEPSGRN.

Cys5 serves as a coordination point for Zn(2+). Ser14 bears the Phosphoserine mark. Positions 24 and 29 each coordinate Zn(2+). The tract at residues 35–57 (SGKTPNTDPTEAPATPEVLGGPE) is disordered. His89 is a Zn(2+) binding site. 5 residues coordinate DNA: Thr99, Tyr118, Gln119, Asn127, and Arg132. Cys149 acts as the Nucleophile; methyl group acceptor in catalysis. Ser155 is a DNA binding site. Ser205 carries the phosphoserine modification.

Belongs to the MGMT family. Zn(2+) is required as a cofactor.

It localises to the nucleus. The enzyme catalyses a 6-O-methyl-2'-deoxyguanosine in DNA + L-cysteinyl-[protein] = S-methyl-L-cysteinyl-[protein] + a 2'-deoxyguanosine in DNA. The catalysed reaction is a 4-O-methyl-thymidine in DNA + L-cysteinyl-[protein] = a thymidine in DNA + S-methyl-L-cysteinyl-[protein]. Functionally, involved in the cellular defense against the biological effects of O6-methylguanine (O6-MeG) and O4-methylthymine (O4-MeT) in DNA. Repairs the methylated nucleobase in DNA by stoichiometrically transferring the methyl group to a cysteine residue in the enzyme. This is a suicide reaction: the enzyme is irreversibly inactivated. The protein is Methylated-DNA--protein-cysteine methyltransferase (Mgmt) of Mus musculus (Mouse).